A 275-amino-acid polypeptide reads, in one-letter code: NH(3)-dependent NAD(+) synthetase (275 aa).

Position 46 to 53 (46 to 53) interacts with ATP; the sequence is GISGGQDS. Position 52 (aspartate 52) interacts with Mg(2+). Residue arginine 140 participates in deamido-NAD(+) binding. An ATP-binding site is contributed by threonine 160. Glutamate 165 provides a ligand contact to Mg(2+). Residues lysine 173 and aspartate 180 each contribute to the deamido-NAD(+) site. Lysine 189 and threonine 211 together coordinate ATP. Residue 260-261 participates in deamido-NAD(+) binding; it reads HK.

Belongs to the NAD synthetase family. As to quaternary structure, homodimer.

It carries out the reaction deamido-NAD(+) + NH4(+) + ATP = AMP + diphosphate + NAD(+) + H(+). Its pathway is cofactor biosynthesis; NAD(+) biosynthesis; NAD(+) from deamido-NAD(+) (ammonia route): step 1/1. Functionally, catalyzes the ATP-dependent amidation of deamido-NAD to form NAD. Uses ammonia as a nitrogen source. This is NH(3)-dependent NAD(+) synthetase from Shigella boydii serotype 18 (strain CDC 3083-94 / BS512).